The primary structure comprises 738 residues: Transcription activator of gluconeogenesis SMAC_06113 (738 aa).

A disordered region spans residues 1–65 (MPDDVGPAEA…KYDPKDPLRP (65 aa)). 2 stretches are compositionally biased toward basic and acidic residues: residues 28 to 39 (ATTKDDDEKMAE) and 51 to 64 (GDQK…DPLR). Positions 74 to 102 (CYACQRAHLTCGDERPCQRCIKRGLAEAC) form a DNA-binding region, zn(2)-C6 fungal-type. Disordered regions lie at residues 255 to 278 (SSGA…GDVG), 328 to 404 (HAYA…KRQR), 530 to 579 (GTNS…KEQP), and 636 to 673 (SVPT…TGAN). 2 stretches are compositionally biased toward polar residues: residues 337 to 351 (TSLQ…SPQP) and 530 to 540 (GTNSDTLSVSS). A PAS domain is found at 475-546 (ALFEHEEFMH…SVSSKGGRGG (72 aa)). Low complexity-rich tracts occupy residues 568 to 579 (QQQQSQQQKEQP) and 636 to 655 (SVPT…VNGG).

The protein belongs to the ERT1/acuK family.

It localises to the nucleus. Transcription factor which regulates nonfermentable carbon utilization. Activator of gluconeogenetic genes. This chain is Transcription activator of gluconeogenesis SMAC_06113, found in Sordaria macrospora (strain ATCC MYA-333 / DSM 997 / K(L3346) / K-hell).